A 401-amino-acid chain; its full sequence is S-adenosylmethionine synthase (401 aa).

ATP is bound at residue 136 to 141 (GQGSVD).

This sequence belongs to the AdoMet synthase 2 family. It depends on Mg(2+) as a cofactor.

The catalysed reaction is L-methionine + ATP + H2O = S-adenosyl-L-methionine + phosphate + diphosphate. Its pathway is amino-acid biosynthesis; S-adenosyl-L-methionine biosynthesis; S-adenosyl-L-methionine from L-methionine: step 1/1. Its function is as follows. Catalyzes the formation of S-adenosylmethionine from methionine and ATP. The polypeptide is S-adenosylmethionine synthase (mat) (Pyrococcus abyssi (strain GE5 / Orsay)).